The sequence spans 350 residues: Phenylalanine--tRNA ligase alpha subunit (350 aa).

Mg(2+) is bound at residue glutamate 257.

The protein belongs to the class-II aminoacyl-tRNA synthetase family. Phe-tRNA synthetase alpha subunit type 1 subfamily. Tetramer of two alpha and two beta subunits. Mg(2+) serves as cofactor.

The protein localises to the cytoplasm. The catalysed reaction is tRNA(Phe) + L-phenylalanine + ATP = L-phenylalanyl-tRNA(Phe) + AMP + diphosphate + H(+). In Listeria welshimeri serovar 6b (strain ATCC 35897 / DSM 20650 / CCUG 15529 / CIP 8149 / NCTC 11857 / SLCC 5334 / V8), this protein is Phenylalanine--tRNA ligase alpha subunit.